An 827-amino-acid chain; its full sequence is DNA ligase (827 aa).

NAD(+) is bound by residues 45-49, 94-95, and glutamate 128; these read DAAYD and SL. Residue lysine 130 is the N6-AMP-lysine intermediate of the active site. NAD(+) contacts are provided by arginine 151, glutamate 188, lysine 304, and lysine 328. The Zn(2+) site is built by cysteine 451, cysteine 454, cysteine 475, and cysteine 481. A BRCT domain is found at 748 to 827; it reads AAAAAFSGRT…AEWLAMVEAA (80 aa).

This sequence belongs to the NAD-dependent DNA ligase family. LigA subfamily. It depends on Mg(2+) as a cofactor. The cofactor is Mn(2+).

The catalysed reaction is NAD(+) + (deoxyribonucleotide)n-3'-hydroxyl + 5'-phospho-(deoxyribonucleotide)m = (deoxyribonucleotide)n+m + AMP + beta-nicotinamide D-nucleotide.. DNA ligase that catalyzes the formation of phosphodiester linkages between 5'-phosphoryl and 3'-hydroxyl groups in double-stranded DNA using NAD as a coenzyme and as the energy source for the reaction. It is essential for DNA replication and repair of damaged DNA. This chain is DNA ligase, found in Methylobacterium sp. (strain 4-46).